A 277-amino-acid polypeptide reads, in one-letter code: Zinc transporter ZupT (277 aa).

8 helical membrane passes run 7-27 (VLLA…GSAI), 38-58 (FLAV…FVEI), 73-93 (VLAS…IAVI), 133-155 (AGVL…AFSA), 165-187 (AIAV…PIYY), 196-216 (FLYS…GYVV), 220-240 (FFTP…MVYI), and 257-277 (LCIL…LLFL). The Fe(2+) site is built by asparagine 145 and glutamate 148. Zn(2+) is bound by residues glutamate 148 and histidine 173. Residues asparagine 174, glutamate 177, and glutamate 206 each contribute to the Fe(2+) site. Position 177 (glutamate 177) interacts with Zn(2+).

It belongs to the ZIP transporter (TC 2.A.5) family. ZupT subfamily.

Its subcellular location is the cell inner membrane. The enzyme catalyses Zn(2+)(in) = Zn(2+)(out). Mediates zinc uptake. May also transport other divalent cations. This Nitratidesulfovibrio vulgaris (strain ATCC 29579 / DSM 644 / CCUG 34227 / NCIMB 8303 / VKM B-1760 / Hildenborough) (Desulfovibrio vulgaris) protein is Zinc transporter ZupT.